The chain runs to 440 residues: uncharacterized protein (440 aa).

The next 12 helical transmembrane spans lie at 24 to 44, 47 to 67, 93 to 113, 117 to 137, 155 to 175, 183 to 203, 229 to 249, 276 to 296, 323 to 343, 346 to 366, 379 to 399, and 400 to 420; these read VVIG…APAA, AGSG…CNAI, FWGY…CAAM, VGFY…VVAL, IVAV…GSGA, IGVD…FFAF, LALG…IAVL, VVQI…ILGV, PFRA…TADI, AIGF…ASAL, IPLV…LSSV, and AAGA…RIIT.

The protein belongs to the amino acid-polyamine-organocation (APC) superfamily.

The protein resides in the cell membrane. Probable amino-acid or metabolite transport protein. This is an uncharacterized protein from Mycobacterium bovis (strain ATCC BAA-935 / AF2122/97).